A 65-amino-acid chain; its full sequence is Photosystem II reaction center protein Z (65 aa).

Helical transmembrane passes span 11–31 (LVLA…VIFA) and 44–64 (WLAC…DGIF).

It belongs to the PsbZ family. In terms of assembly, PSII is composed of 1 copy each of membrane proteins PsbA, PsbB, PsbC, PsbD, PsbE, PsbF, PsbH, PsbI, PsbJ, PsbK, PsbL, PsbM, PsbT, PsbY, PsbZ, Psb30/Ycf12, at least 3 peripheral proteins of the oxygen-evolving complex and a large number of cofactors. It forms dimeric complexes.

It is found in the plastid. It localises to the chloroplast thylakoid membrane. In terms of biological role, may control the interaction of photosystem II (PSII) cores with the light-harvesting antenna, regulates electron flow through the 2 photosystem reaction centers. PSII is a light-driven water plastoquinone oxidoreductase, using light energy to abstract electrons from H(2)O, generating a proton gradient subsequently used for ATP formation. In Euglena gracilis, this protein is Photosystem II reaction center protein Z.